A 321-amino-acid polypeptide reads, in one-letter code: Ribose-phosphate pyrophosphokinase (321 aa).

Residues 39–41 (DGE) and 98–99 (RQ) contribute to the ATP site. Mg(2+) contacts are provided by His-132 and Asp-170. Residue Lys-195 is part of the active site. Residues Arg-197, Asp-221, and 225–229 (DTGGT) each bind D-ribose 5-phosphate.

It belongs to the ribose-phosphate pyrophosphokinase family. Class I subfamily. Homohexamer. It depends on Mg(2+) as a cofactor.

It is found in the cytoplasm. The catalysed reaction is D-ribose 5-phosphate + ATP = 5-phospho-alpha-D-ribose 1-diphosphate + AMP + H(+). Its pathway is metabolic intermediate biosynthesis; 5-phospho-alpha-D-ribose 1-diphosphate biosynthesis; 5-phospho-alpha-D-ribose 1-diphosphate from D-ribose 5-phosphate (route I): step 1/1. In terms of biological role, involved in the biosynthesis of the central metabolite phospho-alpha-D-ribosyl-1-pyrophosphate (PRPP) via the transfer of pyrophosphoryl group from ATP to 1-hydroxyl of ribose-5-phosphate (Rib-5-P). The polypeptide is Ribose-phosphate pyrophosphokinase (Mycoplasmopsis pulmonis (strain UAB CTIP) (Mycoplasma pulmonis)).